A 175-amino-acid chain; its full sequence is Large ribosomal subunit protein eL14 (175 aa).

Residues 150–175 (KAAKMDSTEGAKRRMQKAIAARKAKK) are disordered. Residues 152 to 161 (AKMDSTEGAK) show a composition bias toward basic and acidic residues. Positions 162-175 (RRMQKAIAARKAKK) are enriched in basic residues.

Belongs to the eukaryotic ribosomal protein eL14 family.

Its function is as follows. Component of the large ribosomal subunit. The ribosome is a large ribonucleoprotein complex responsible for the synthesis of proteins in the cell. This Leishmania donovani protein is Large ribosomal subunit protein eL14 (RPL14).